A 483-amino-acid polypeptide reads, in one-letter code: Probable cobyric acid synthase (483 aa).

A GATase cobBQ-type domain is found at 247 to 433; it reads ELHIQIIKLP…LHGIFHNFAF (187 aa). The Nucleophile role is filled by cysteine 325. Histidine 425 is an active-site residue.

This sequence belongs to the CobB/CobQ family. CobQ subfamily.

It functions in the pathway cofactor biosynthesis; adenosylcobalamin biosynthesis. In terms of biological role, catalyzes amidations at positions B, D, E, and G on adenosylcobyrinic A,C-diamide. NH(2) groups are provided by glutamine, and one molecule of ATP is hydrogenolyzed for each amidation. The protein is Probable cobyric acid synthase of Thermococcus gammatolerans (strain DSM 15229 / JCM 11827 / EJ3).